The primary structure comprises 279 residues: Pantothenate synthetase (279 aa).

31 to 38 (MGALHEGH) contributes to the ATP binding site. Residue H38 is the Proton donor of the active site. Q62 contributes to the (R)-pantoate binding site. Position 62 (Q62) interacts with beta-alanine. Residue 148-151 (GEKD) participates in ATP binding. Residue Q154 coordinates (R)-pantoate. Residues V177 and 185 to 188 (LSSR) each bind ATP.

Belongs to the pantothenate synthetase family. Homodimer.

It localises to the cytoplasm. It catalyses the reaction (R)-pantoate + beta-alanine + ATP = (R)-pantothenate + AMP + diphosphate + H(+). It participates in cofactor biosynthesis; (R)-pantothenate biosynthesis; (R)-pantothenate from (R)-pantoate and beta-alanine: step 1/1. In terms of biological role, catalyzes the condensation of pantoate with beta-alanine in an ATP-dependent reaction via a pantoyl-adenylate intermediate. This Cereibacter sphaeroides (strain ATCC 17023 / DSM 158 / JCM 6121 / CCUG 31486 / LMG 2827 / NBRC 12203 / NCIMB 8253 / ATH 2.4.1.) (Rhodobacter sphaeroides) protein is Pantothenate synthetase.